We begin with the raw amino-acid sequence, 132 residues long: Intraflagellar transport protein 20 homolog A (132 aa).

A coiled-coil region spans residues glutamate 87–aspartate 112.

It is found in the golgi apparatus. It localises to the cis-Golgi network. The protein resides in the cytoplasm. Its subcellular location is the cytoskeleton. The protein localises to the microtubule organizing center. It is found in the centrosome. It localises to the centriole. The protein resides in the cell projection. Its subcellular location is the cilium. Involved in ciliary process assembly. May play a role in the trafficking of ciliary membrane proteins from the Golgi complex to the cilium. Regulates the platelet-derived growth factor receptor-alpha (PDGFRA) signaling pathway. Plays an important role in spermatogenesis, particularly spermiogenesis, when germ cells form flagella. The polypeptide is Intraflagellar transport protein 20 homolog A (ift20-a) (Xenopus laevis (African clawed frog)).